A 378-amino-acid chain; its full sequence is Rhodopsin (378 aa).

Residues Met-1–Trp-53 lie on the Extracellular side of the membrane. Asn-24 carries an N-linked (GlcNAc...) asparagine glycan. Residues His-54–Ile-78 form a helical membrane-spanning segment. The Cytoplasmic portion of the chain corresponds to Phe-79–Asn-90. Residues Leu-91–Cys-115 traverse the membrane as a helical segment. The Extracellular segment spans residues Tyr-116–Tyr-130. Cys-127 and Cys-204 are oxidised to a cystine. Residues Gly-131–Phe-150 form a helical membrane-spanning segment. Over Asp-151 to Gly-169 the chain is Cytoplasmic. A helical membrane pass occupies residues Ala-170–Asn-193. Over Arg-194 to Ser-217 the chain is Extracellular. N-linked (GlcNAc...) asparagine glycosylation is present at Asn-200. Residues Tyr-218–Val-245 form a helical membrane-spanning segment. The Cytoplasmic portion of the chain corresponds to Ala-246 to Lys-280. The chain crosses the membrane as a helical span at residues Val-281–Ile-304. Residues Phe-305–Asn-311 lie on the Extracellular side of the membrane. Residues Pro-312 to Ser-336 form a helical membrane-spanning segment. Lys-323 is modified (N6-(retinylidene)lysine). Topologically, residues His-337 to Ala-378 are cytoplasmic. The segment at Gly-356–Ala-378 is disordered. Residues Thr-362–Glu-371 show a composition bias toward low complexity.

It belongs to the G-protein coupled receptor 1 family. Opsin subfamily. In terms of processing, phosphorylated on some or all of the serine and threonine residues present in the C-terminal region.

It is found in the membrane. Visual pigments are the light-absorbing molecules that mediate vision. They consist of an apoprotein, opsin, covalently linked to cis-retinal. This Cataglyphis bombycina (Saharan silver ant) protein is Rhodopsin.